The sequence spans 179 residues: Large ribosomal subunit protein uL5 (179 aa).

It belongs to the universal ribosomal protein uL5 family. Part of the 50S ribosomal subunit; part of the 5S rRNA/L5/L18/L25 subcomplex. Contacts the 5S rRNA and the P site tRNA. Forms a bridge to the 30S subunit in the 70S ribosome.

Functionally, this is one of the proteins that bind and probably mediate the attachment of the 5S RNA into the large ribosomal subunit, where it forms part of the central protuberance. In the 70S ribosome it contacts protein S13 of the 30S subunit (bridge B1b), connecting the 2 subunits; this bridge is implicated in subunit movement. Contacts the P site tRNA; the 5S rRNA and some of its associated proteins might help stabilize positioning of ribosome-bound tRNAs. The protein is Large ribosomal subunit protein uL5 of Parasynechococcus marenigrum (strain WH8102).